The following is a 405-amino-acid chain: uncharacterized protein (405 aa).

Helical transmembrane passes span 19-39 (IVSIVMFNFASYLTIGLPLAV), 47-67 (VMGFSAFWAGLVISLQYFATL), 85-105 (IVVFGLCGCFLSGLGYLTAGL), 107-127 (ASLPVISLLLLCLGRVILGIG), 156-176 (GIVTYGAMAMGAPLGVVFYHW), 178-198 (GLQALALIIMGVALVAILLAI), 224-244 (GMALALASAGFGVIATFITLF), 252-272 (GAAFALTLFSCAFVGTRLLFP), 283-303 (VAMICFSVEIIGLLLVGVATM), 309-329 (IGVLLAGAGFSLVFPALGVVA), 344-364 (TYTVFMDLSLGVTGPLAGLVM), and 366-386 (WAGVPVIYLAAAGLVAIALLL).

This sequence belongs to the major facilitator superfamily. YhhS family.

Its subcellular location is the cell inner membrane. This is an uncharacterized protein from Escherichia coli O6:H1 (strain CFT073 / ATCC 700928 / UPEC).